The sequence spans 307 residues: Olfactory receptor 8K5 (307 aa).

Residues Met1 to Ile25 are Extracellular-facing. Residue Asn5 is glycosylated (N-linked (GlcNAc...) asparagine). A helical transmembrane segment spans residues Pro26 to Ile46. Residues Ile47 to His54 are Cytoplasmic-facing. A helical membrane pass occupies residues Leu55–Thr75. The Extracellular portion of the chain corresponds to Val76–Ala99. Cys97 and Cys189 are joined by a disulfide. Residues Gln100–Tyr120 form a helical membrane-spanning segment. Topologically, residues Asp121 to Arg139 are cytoplasmic. A helical transmembrane segment spans residues Leu140–Thr160. Over Ile161–Leu197 the chain is Extracellular. The helical transmembrane segment at Leu198 to Ser217 threads the bilayer. Residues Tyr218–Ala237 are Cytoplasmic-facing. The helical transmembrane segment at Phe238–Met258 threads the bilayer. At Tyr259–Asp271 the chain is on the extracellular side. A glycan (N-linked (GlcNAc...) asparagine) is linked at Asn263. Residues Lys272 to Leu292 traverse the membrane as a helical segment. Over Arg293–Asn307 the chain is Cytoplasmic.

It belongs to the G-protein coupled receptor 1 family.

The protein resides in the cell membrane. Its function is as follows. Odorant receptor. This Homo sapiens (Human) protein is Olfactory receptor 8K5 (OR8K5).